The chain runs to 500 residues: Abscisic acid 8'-hydroxylase 3 (500 aa).

The helical transmembrane segment at Ala-3–Val-23 threads the bilayer. Cys-426 lines the heme pocket.

This sequence belongs to the cytochrome P450 family. Heme serves as cofactor.

The protein resides in the membrane. The enzyme catalyses 2-cis-(+)-abscisate + reduced [NADPH--hemoprotein reductase] + O2 = (+)-8'-hydroxyabscisate + oxidized [NADPH--hemoprotein reductase] + H2O + H(+). It functions in the pathway plant hormone degradation; abscisic acid degradation. Its function is as follows. Involved in the oxidative degradation of abscisic acid. The chain is Abscisic acid 8'-hydroxylase 3 (CYP707A7) from Oryza sativa subsp. japonica (Rice).